A 499-amino-acid chain; its full sequence is UTP--glucose-1-phosphate uridylyltransferase (499 aa).

An N-acetylserine modification is found at Ser2. Residue Ser17 is modified to Phosphoserine. Thr19 carries the phosphothreonine modification. Ser21 and Ser79 each carry phosphoserine. UTP is bound by residues 109 to 112 (LNGG), Lys123, Gln186, and Gly215. Position 111 to 112 (111 to 112 (GG)) interacts with substrate. Mg(2+) is bound at residue Lys123. Substrate-binding positions include His216 and 244-246 (NGD). Position 246 (Asp246) interacts with UTP. Asp246 is a binding site for Mg(2+). Arg369 carries the post-translational modification Omega-N-methylarginine. Residue Lys388 coordinates UTP. Lys388 is an active-site residue. An oligomerization region spans residues 448–499 (HLTITGNVFLGKDVTLRGTVIIVCSDGHKIDIPNGSILENVVVTGNLQILEH).

Belongs to the UDPGP type 1 family. In terms of assembly, homooctamer.

The catalysed reaction is alpha-D-glucose 1-phosphate + UTP + H(+) = UDP-alpha-D-glucose + diphosphate. Functionally, plays a central role as a glucosyl donor in cellular metabolic pathways. This is UTP--glucose-1-phosphate uridylyltransferase from Saccharomyces cerevisiae (strain ATCC 204508 / S288c) (Baker's yeast).